The sequence spans 247 residues: UDP-2,3-diacylglucosamine hydrolase (247 aa).

5 residues coordinate Mn(2+): D8, H10, D41, N79, and H114. A substrate-binding site is contributed by 79–80 (NR). Substrate contacts are provided by D122, S160, D171, Q174, and H202. Residues H202 and H204 each coordinate Mn(2+).

The protein belongs to the LpxH family. Mn(2+) is required as a cofactor.

The protein resides in the cell inner membrane. The enzyme catalyses UDP-2-N,3-O-bis[(3R)-3-hydroxytetradecanoyl]-alpha-D-glucosamine + H2O = 2-N,3-O-bis[(3R)-3-hydroxytetradecanoyl]-alpha-D-glucosaminyl 1-phosphate + UMP + 2 H(+). The protein operates within glycolipid biosynthesis; lipid IV(A) biosynthesis; lipid IV(A) from (3R)-3-hydroxytetradecanoyl-[acyl-carrier-protein] and UDP-N-acetyl-alpha-D-glucosamine: step 4/6. In terms of biological role, hydrolyzes the pyrophosphate bond of UDP-2,3-diacylglucosamine to yield 2,3-diacylglucosamine 1-phosphate (lipid X) and UMP by catalyzing the attack of water at the alpha-P atom. Involved in the biosynthesis of lipid A, a phosphorylated glycolipid that anchors the lipopolysaccharide to the outer membrane of the cell. This is UDP-2,3-diacylglucosamine hydrolase from Xanthomonas campestris pv. campestris (strain 8004).